We begin with the raw amino-acid sequence, 213 residues long: Imidazole glycerol phosphate synthase subunit HisH (213 aa).

A Glutamine amidotransferase type-1 domain is found at 3–213; the sequence is MIGVIDYGMG…VGIVTGRENG (211 aa). The Nucleophile role is filled by Cys81. Active-site residues include His188 and Glu190.

As to quaternary structure, heterodimer of HisH and HisF.

Its subcellular location is the cytoplasm. The enzyme catalyses 5-[(5-phospho-1-deoxy-D-ribulos-1-ylimino)methylamino]-1-(5-phospho-beta-D-ribosyl)imidazole-4-carboxamide + L-glutamine = D-erythro-1-(imidazol-4-yl)glycerol 3-phosphate + 5-amino-1-(5-phospho-beta-D-ribosyl)imidazole-4-carboxamide + L-glutamate + H(+). The catalysed reaction is L-glutamine + H2O = L-glutamate + NH4(+). It functions in the pathway amino-acid biosynthesis; L-histidine biosynthesis; L-histidine from 5-phospho-alpha-D-ribose 1-diphosphate: step 5/9. In terms of biological role, IGPS catalyzes the conversion of PRFAR and glutamine to IGP, AICAR and glutamate. The HisH subunit catalyzes the hydrolysis of glutamine to glutamate and ammonia as part of the synthesis of IGP and AICAR. The resulting ammonia molecule is channeled to the active site of HisF. This chain is Imidazole glycerol phosphate synthase subunit HisH, found in Geobacillus thermodenitrificans (strain NG80-2).